Consider the following 392-residue polypeptide: MKKVILIKYGEIALKGKNRHLFESSIIENIRLAIGEGAPPIEQCRGRLYLQLTTEKDISCYREALKRVFGVVGFALAYRLNLEINLEEMEEVLIKHLRKLESKSLAFRVDTRRTVKSFPMDSMEINKKLGALILQHFPKWQVNLNNPELTIFIEVRDEGLFIYTTEDHEDGLGGLPVGVGGRGLLLLSGGIDSPVAGWTLLKRGMMIDAVYFHSFPYTGEKAKEKVIDLARVLTSWKLRAINLHIPYFTKIQETVNKMCPESTWTIIHRRFMMRIAEKLTKSTYHTLITGENLGQVASQTIQNIAVINQATNLPILRPLISFDKNDIIKIAEKIGTFRISKRPYEDCCALFAPKNPETKAKEEAILKAEENLPLNELINEALEKMETLRIKN.

Positions 59–166 constitute a THUMP domain; sequence SCYREALKRV…DEGLFIYTTE (108 aa). ATP-binding positions include 186 to 187, 211 to 212, Arg269, Gly290, and Gln299; these read LL and YF.

This sequence belongs to the ThiI family.

The protein resides in the cytoplasm. The enzyme catalyses [ThiI sulfur-carrier protein]-S-sulfanyl-L-cysteine + a uridine in tRNA + 2 reduced [2Fe-2S]-[ferredoxin] + ATP + H(+) = [ThiI sulfur-carrier protein]-L-cysteine + a 4-thiouridine in tRNA + 2 oxidized [2Fe-2S]-[ferredoxin] + AMP + diphosphate. It catalyses the reaction [ThiS sulfur-carrier protein]-C-terminal Gly-Gly-AMP + S-sulfanyl-L-cysteinyl-[cysteine desulfurase] + AH2 = [ThiS sulfur-carrier protein]-C-terminal-Gly-aminoethanethioate + L-cysteinyl-[cysteine desulfurase] + A + AMP + 2 H(+). The protein operates within cofactor biosynthesis; thiamine diphosphate biosynthesis. Its function is as follows. Catalyzes the ATP-dependent transfer of a sulfur to tRNA to produce 4-thiouridine in position 8 of tRNAs, which functions as a near-UV photosensor. Also catalyzes the transfer of sulfur to the sulfur carrier protein ThiS, forming ThiS-thiocarboxylate. This is a step in the synthesis of thiazole, in the thiamine biosynthesis pathway. The sulfur is donated as persulfide by IscS. In Coxiella burnetii (strain RSA 493 / Nine Mile phase I), this protein is Probable tRNA sulfurtransferase.